Here is a 174-residue protein sequence, read N- to C-terminus: MAVLDIVTYPNKVLKQISKPVERFDKDLHKLLDDMYETMIKNNGVGLAAIQVAVPIRALLIDIGDEEGKQSKDTLIEVINPEFLTWDGTQKDTEGCLSVPDYFDEVERYKNVKVKFFDRFGKEHVMEAEGLLSVAFQHETDHLDGHLFVERLDYIKRKKFEKEWKKLLKQKRKK.

The Fe cation site is built by Cys-96 and His-138. Glu-139 is a catalytic residue. Residue His-142 participates in Fe cation binding.

Belongs to the polypeptide deformylase family. It depends on Fe(2+) as a cofactor.

The enzyme catalyses N-terminal N-formyl-L-methionyl-[peptide] + H2O = N-terminal L-methionyl-[peptide] + formate. Its function is as follows. Removes the formyl group from the N-terminal Met of newly synthesized proteins. Requires at least a dipeptide for an efficient rate of reaction. N-terminal L-methionine is a prerequisite for activity but the enzyme has broad specificity at other positions. This Nautilia profundicola (strain ATCC BAA-1463 / DSM 18972 / AmH) protein is Peptide deformylase.